A 1171-amino-acid polypeptide reads, in one-letter code: ATP-dependent helicase/deoxyribonuclease subunit B (1171 aa).

The UvrD-like helicase ATP-binding domain occupies Met1–Arg343. Gly8–Ser15 serves as a coordination point for ATP. The 307-residue stretch at Met281–Asp587 folds into the UvrD-like helicase C-terminal domain. [4Fe-4S] cluster-binding residues include Cys805, Cys1129, Cys1132, and Cys1138.

It belongs to the helicase family. AddB/RexB type 1 subfamily. As to quaternary structure, heterodimer of AddA and AddB. Requires Mg(2+) as cofactor. It depends on [4Fe-4S] cluster as a cofactor.

Its function is as follows. The heterodimer acts as both an ATP-dependent DNA helicase and an ATP-dependent, dual-direction single-stranded exonuclease. Recognizes the chi site generating a DNA molecule suitable for the initiation of homologous recombination. The AddB subunit has 5' -&gt; 3' nuclease activity but not helicase activity. This chain is ATP-dependent helicase/deoxyribonuclease subunit B, found in Bacillus thuringiensis subsp. konkukian (strain 97-27).